Reading from the N-terminus, the 328-residue chain is Methionyl-tRNA formyltransferase (328 aa).

S121–P124 is a binding site for (6S)-5,6,7,8-tetrahydrofolate.

It belongs to the Fmt family.

It carries out the reaction L-methionyl-tRNA(fMet) + (6R)-10-formyltetrahydrofolate = N-formyl-L-methionyl-tRNA(fMet) + (6S)-5,6,7,8-tetrahydrofolate + H(+). Its function is as follows. Attaches a formyl group to the free amino group of methionyl-tRNA(fMet). The formyl group appears to play a dual role in the initiator identity of N-formylmethionyl-tRNA by promoting its recognition by IF2 and preventing the misappropriation of this tRNA by the elongation apparatus. The protein is Methionyl-tRNA formyltransferase of Burkholderia thailandensis (strain ATCC 700388 / DSM 13276 / CCUG 48851 / CIP 106301 / E264).